The primary structure comprises 81 residues: Acyl carrier protein (81 aa).

One can recognise a Carrier domain in the interval 4 to 79; that stretch reads SEILEKVKAI…DVLDFINNKV (76 aa). Serine 39 bears the O-(pantetheine 4'-phosphoryl)serine mark.

Belongs to the acyl carrier protein (ACP) family. In terms of processing, 4'-phosphopantetheine is transferred from CoA to a specific serine of apo-ACP by AcpS. This modification is essential for activity because fatty acids are bound in thioester linkage to the sulfhydryl of the prosthetic group.

Its subcellular location is the cytoplasm. It functions in the pathway lipid metabolism; fatty acid biosynthesis. Its function is as follows. Carrier of the growing fatty acid chain in fatty acid biosynthesis. The sequence is that of Acyl carrier protein from Thermosynechococcus vestitus (strain NIES-2133 / IAM M-273 / BP-1).